The sequence spans 217 residues: MKLGLIGKKVGMTRIFTESGSSVPVTVLDVSKNRVVQIKTAERDGYSAIQLTQGYRRKNRITKALSGHFARAGVEAGKVIKEFRIEQQAINSDLKLGSEINVEIFLTGSKVDVSGVSIGKGYAGTIKRHNFSSSRASHGNSRSHNVPGSIGMAQDPGRVFPGKKMTGRLGGVNSTIQNIEVVRVDTVRGLIFLKGSVPGSKGNGVFIRPSVKHANKQ.

The disordered stretch occupies residues 131-155 (FSSSRASHGNSRSHNVPGSIGMAQD). Positions 132–145 (SSSRASHGNSRSHN) are enriched in low complexity. Glutamine 154 bears the N5-methylglutamine mark.

This sequence belongs to the universal ribosomal protein uL3 family. As to quaternary structure, part of the 50S ribosomal subunit. Forms a cluster with proteins L14 and L19. In terms of processing, methylated by PrmB.

One of the primary rRNA binding proteins, it binds directly near the 3'-end of the 23S rRNA, where it nucleates assembly of the 50S subunit. The protein is Large ribosomal subunit protein uL3 of Nitrosomonas eutropha (strain DSM 101675 / C91 / Nm57).